Reading from the N-terminus, the 838-residue chain is Probable beta-glucosidase I (838 aa).

Asn197 carries N-linked (GlcNAc...) asparagine glycosylation. The active site involves Asp225. Positions 395-555 (DGKKGFKFRV…SQEELISKAA (161 aa)) constitute a PA14 domain. Asn493 carries N-linked (GlcNAc...) asparagine glycosylation.

The protein belongs to the glycosyl hydrolase 3 family.

It is found in the secreted. It catalyses the reaction Hydrolysis of terminal, non-reducing beta-D-glucosyl residues with release of beta-D-glucose.. It functions in the pathway glycan metabolism; cellulose degradation. Beta-glucosidases are one of a number of cellulolytic enzymes involved in the degradation of cellulosic biomass. Catalyzes the last step releasing glucose from the inhibitory cellobiose. The chain is Probable beta-glucosidase I (bglI) from Aspergillus fumigatus (strain ATCC MYA-4609 / CBS 101355 / FGSC A1100 / Af293) (Neosartorya fumigata).